Reading from the N-terminus, the 704-residue chain is DNA-binding protein RFX2 (704 aa).

The disordered stretch occupies residues 1–39 (MQNSEGGADSPASVALRPSAAAPPVPASPQRVLVQAASS). Residues 10–20 (SPASVALRPSA) are compositionally biased toward low complexity. Serine 28 is modified (phosphoserine). The segment at residues 199–274 (HLQWLLDNYE…YHYYGIRLKP (76 aa)) is a DNA-binding region (RFX-type winged-helix). The interval 292-334 (QQPMHQKPRYRPAQKTDSLGDSSSHSGLHSTPEQTTAAQNQHH) is disordered. Residues 307 to 334 (TDSLGDSSSHSGLHSTPEQTTAAQNQHH) show a composition bias toward low complexity. The residue at position 416 (serine 416) is a Phosphoserine.

This sequence belongs to the RFX family. Homodimer; probably only forms homodimers in testis. Heterodimer; heterodimerizes with RFX1 and RFX3.

The protein localises to the nucleus. The protein resides in the cytoplasm. Transcription factor that acts as a key regulator of spermatogenesis. Acts by regulating expression of genes required for the haploid phase during spermiogenesis, such as genes required for cilium assembly and function. Recognizes and binds the X-box, a regulatory motif with DNA sequence 5'-GTNRCC(0-3N)RGYAAC-3' present on promoters. Probably activates transcription of the testis-specific histone gene H1-6. The chain is DNA-binding protein RFX2 (RFX2) from Pongo abelii (Sumatran orangutan).